Reading from the N-terminus, the 569-residue chain is Proline--tRNA ligase (569 aa).

The protein belongs to the class-II aminoacyl-tRNA synthetase family. ProS type 1 subfamily. In terms of assembly, homodimer.

It is found in the cytoplasm. The catalysed reaction is tRNA(Pro) + L-proline + ATP = L-prolyl-tRNA(Pro) + AMP + diphosphate. Functionally, catalyzes the attachment of proline to tRNA(Pro) in a two-step reaction: proline is first activated by ATP to form Pro-AMP and then transferred to the acceptor end of tRNA(Pro). As ProRS can inadvertently accommodate and process non-cognate amino acids such as alanine and cysteine, to avoid such errors it has two additional distinct editing activities against alanine. One activity is designated as 'pretransfer' editing and involves the tRNA(Pro)-independent hydrolysis of activated Ala-AMP. The other activity is designated 'posttransfer' editing and involves deacylation of mischarged Ala-tRNA(Pro). The misacylated Cys-tRNA(Pro) is not edited by ProRS. The sequence is that of Proline--tRNA ligase from Lactiplantibacillus plantarum (strain ATCC BAA-793 / NCIMB 8826 / WCFS1) (Lactobacillus plantarum).